The sequence spans 291 residues: Phosphatidylserine decarboxylase proenzyme 2 (291 aa).

Residues aspartate 112 and serine 251 each act as charge relay system; for autoendoproteolytic cleavage activity in the active site. Serine 251 acts as the Schiff-base intermediate with substrate; via pyruvic acid; for decarboxylase activity in catalysis. A Pyruvic acid (Ser); by autocatalysis modification is found at serine 251.

The protein belongs to the phosphatidylserine decarboxylase family. PSD-B subfamily. Prokaryotic type II sub-subfamily. As to quaternary structure, heterodimer of a large membrane-associated beta subunit and a small pyruvoyl-containing alpha subunit. Pyruvate serves as cofactor. Post-translationally, is synthesized initially as an inactive proenzyme. Formation of the active enzyme involves a self-maturation process in which the active site pyruvoyl group is generated from an internal serine residue via an autocatalytic post-translational modification. Two non-identical subunits are generated from the proenzyme in this reaction, and the pyruvate is formed at the N-terminus of the alpha chain, which is derived from the carboxyl end of the proenzyme. The autoendoproteolytic cleavage occurs by a canonical serine protease mechanism, in which the side chain hydroxyl group of the serine supplies its oxygen atom to form the C-terminus of the beta chain, while the remainder of the serine residue undergoes an oxidative deamination to produce ammonia and the pyruvoyl prosthetic group on the alpha chain. During this reaction, the Ser that is part of the protease active site of the proenzyme becomes the pyruvoyl prosthetic group, which constitutes an essential element of the active site of the mature decarboxylase.

The protein resides in the cell membrane. It carries out the reaction a 1,2-diacyl-sn-glycero-3-phospho-L-serine + H(+) = a 1,2-diacyl-sn-glycero-3-phosphoethanolamine + CO2. Its pathway is phospholipid metabolism; phosphatidylethanolamine biosynthesis; phosphatidylethanolamine from CDP-diacylglycerol: step 2/2. Its function is as follows. Catalyzes the formation of phosphatidylethanolamine (PtdEtn) from phosphatidylserine (PtdSer). In Clostridium acetobutylicum (strain ATCC 824 / DSM 792 / JCM 1419 / IAM 19013 / LMG 5710 / NBRC 13948 / NRRL B-527 / VKM B-1787 / 2291 / W), this protein is Phosphatidylserine decarboxylase proenzyme 2.